Consider the following 567-residue polypeptide: MFS-type transporter poxA (567 aa).

Residues methionine 1–lysine 23 show a composition bias toward basic and acidic residues. The segment at methionine 1–glutamate 24 is disordered. Helical transmembrane passes span alanine 35–glycine 55, alanine 77–alanine 97, leucine 108–valine 128, glycine 141–leucine 161, serine 165–isoleucine 185, tryptophan 197–phenylalanine 217, leucine 240–glycine 260, serine 271–tryptophan 291, isoleucine 311–phenylalanine 331, and valine 349–valine 369. Asparagine 370 carries N-linked (GlcNAc...) asparagine glycosylation. 4 helical membrane passes run threonine 372–leucine 392, isoleucine 410–leucine 430, leucine 436–leucine 456, and alanine 515–phenylalanine 535. The disordered stretch occupies residues glutamate 547–alanine 567.

This sequence belongs to the major facilitator superfamily. TCR/Tet family.

It is found in the cell membrane. MFS-type transporter; part of the gene cluster that mediates the biosynthesis of oxaleimides, cytotoxic compounds containing an unusual disubstituted succinimide moiety. The sequence is that of MFS-type transporter poxA from Penicillium oxalicum (strain 114-2 / CGMCC 5302) (Penicillium decumbens).